Consider the following 437-residue polypeptide: Serine--tRNA ligase (437 aa).

Position 244 to 246 (244 to 246 (TAE)) interacts with L-serine. 275–277 (RSE) lines the ATP pocket. L-serine is bound at residue Glu-298. 362–365 (EISS) provides a ligand contact to ATP. Ser-397 is an L-serine binding site.

It belongs to the class-II aminoacyl-tRNA synthetase family. Type-1 seryl-tRNA synthetase subfamily. As to quaternary structure, homodimer. The tRNA molecule binds across the dimer.

The protein resides in the cytoplasm. It catalyses the reaction tRNA(Ser) + L-serine + ATP = L-seryl-tRNA(Ser) + AMP + diphosphate + H(+). The catalysed reaction is tRNA(Sec) + L-serine + ATP = L-seryl-tRNA(Sec) + AMP + diphosphate + H(+). It participates in aminoacyl-tRNA biosynthesis; selenocysteinyl-tRNA(Sec) biosynthesis; L-seryl-tRNA(Sec) from L-serine and tRNA(Sec): step 1/1. Its function is as follows. Catalyzes the attachment of serine to tRNA(Ser). Is also able to aminoacylate tRNA(Sec) with serine, to form the misacylated tRNA L-seryl-tRNA(Sec), which will be further converted into selenocysteinyl-tRNA(Sec). This is Serine--tRNA ligase from Nitrosomonas eutropha (strain DSM 101675 / C91 / Nm57).